The following is a 569-amino-acid chain: Urease subunit alpha (569 aa).

The 439-residue stretch at 131–569 folds into the Urease domain; the sequence is GGIDTHIHFI…LPLAQRYLLL (439 aa). Ni(2+) is bound by residues H136, H138, and K219. K219 carries the post-translational modification N6-carboxylysine. Residue H221 coordinates substrate. Positions 248 and 274 each coordinate Ni(2+). The active-site Proton donor is H322. D362 is a Ni(2+) binding site.

This sequence belongs to the metallo-dependent hydrolases superfamily. Urease alpha subunit family. As to quaternary structure, heterotrimer of UreA (gamma), UreB (beta) and UreC (alpha) subunits. Three heterotrimers associate to form the active enzyme. It depends on Ni cation as a cofactor. Post-translationally, carboxylation allows a single lysine to coordinate two nickel ions.

The protein localises to the cytoplasm. The catalysed reaction is urea + 2 H2O + H(+) = hydrogencarbonate + 2 NH4(+). It functions in the pathway nitrogen metabolism; urea degradation; CO(2) and NH(3) from urea (urease route): step 1/1. This is Urease subunit alpha from Synechococcus sp. (strain CC9311).